A 504-amino-acid polypeptide reads, in one-letter code: Probable chlorophyll(ide) b reductase NYC1, chloroplastic (504 aa).

Residues 1–33 (MAAAAVVHLSVHGRLRRSPELHARPYHRPSLLR) constitute a chloroplast transit peptide. A disordered region spans residues 41–63 (ADNGGEEASSSPPPPTTAEARRR). 2 consecutive transmembrane segments (helical) span residues 114 to 134 (YVIT…LSGG) and 141 to 161 (LIWY…ANSV). 175-199 (ITGSTRGLGKALAREFLLSGDRVVI) is an NAD(+) binding site. The active-site Proton acceptor is the Y339. The helical transmembrane segment at 479–499 (WVSVFSLSVVCAFIILSSSGG) threads the bilayer.

Belongs to the short-chain dehydrogenases/reductases (SDR) family. As to quaternary structure, interacts with NOL to form a complex that acts as a chlorophyll b reductase. As to expression, expressed in leaves and stems. Also detected in non-photosynthetic tissues such as roots.

It is found in the plastid. The protein resides in the chloroplast thylakoid membrane. The catalysed reaction is 7(1)-hydroxychlorophyllide a + NAD(+) = chlorophyllide b + NADH + H(+). It catalyses the reaction 7(1)-hydroxychlorophyllide a + NADP(+) = chlorophyllide b + NADPH + H(+). In terms of biological role, required for proper chloroplast degradation. Involved in chlorophyll b degradation. In Oryza sativa subsp. japonica (Rice), this protein is Probable chlorophyll(ide) b reductase NYC1, chloroplastic (NYC1).